The sequence spans 225 residues: Glucosyl-3-phosphoglycerate phosphatase (225 aa).

Arg-10 contacts substrate. His-11 (tele-phosphohistidine intermediate) is an active-site residue. Substrate is bound at residue Arg-60. Glu-84 serves as the catalytic Proton donor/acceptor. Residue His-158 participates in substrate binding.

Belongs to the phosphoglycerate mutase family. As to quaternary structure, homodimer.

The catalysed reaction is (2R)-2-O-(alpha-D-glucopyranosyl)-3-phospho-glycerate + H2O = (2R)-2-O-(alpha-D-glucopyranosyl)-glycerate + phosphate. Its function is as follows. Involved in the biosynthesis of mycobacterial methylglucose lipopolysaccharides (MGLP). Catalyzes the dephosphorylation of glucosyl-3-phosphoglycerate (GPG) to glucosylglycerate. This Mycolicibacterium vanbaalenii (strain DSM 7251 / JCM 13017 / BCRC 16820 / KCTC 9966 / NRRL B-24157 / PYR-1) (Mycobacterium vanbaalenii) protein is Glucosyl-3-phosphoglycerate phosphatase.